A 516-amino-acid polypeptide reads, in one-letter code: 1-pyrroline-5-carboxylate dehydrogenase (516 aa).

Residues E287 and C321 contribute to the active site.

The protein belongs to the aldehyde dehydrogenase family. RocA subfamily.

It carries out the reaction L-glutamate 5-semialdehyde + NAD(+) + H2O = L-glutamate + NADH + 2 H(+). It functions in the pathway amino-acid degradation; L-proline degradation into L-glutamate; L-glutamate from L-proline: step 2/2. The chain is 1-pyrroline-5-carboxylate dehydrogenase from Bacillus licheniformis (strain ATCC 14580 / DSM 13 / JCM 2505 / CCUG 7422 / NBRC 12200 / NCIMB 9375 / NCTC 10341 / NRRL NRS-1264 / Gibson 46).